The primary structure comprises 102 residues: Membrane-bound protein LytA (102 aa).

The N-terminal stretch at 1-16 (MKKFIALLFFILLLSG) is a signal peptide. A lipid anchor (N-palmitoyl cysteine) is attached at Cys17. Residue Cys17 is the site of S-diacylglycerol cysteine attachment.

It is found in the cell membrane. Possible role in the secretion of LytB and LytC. This is Membrane-bound protein LytA (lytA) from Bacillus subtilis (strain 168).